A 103-amino-acid polypeptide reads, in one-letter code: Histone H4 (103 aa).

Residues 1–14 show a composition bias toward gly residues; the sequence is MSGRGKGGKGLGKG. The segment at 1 to 20 is disordered; it reads MSGRGKGGKGLGKGGAKRHR. An N6-(2-hydroxyisobutyryl)lysine; alternate mark is found at Lys6, Lys9, Lys13, Lys17, Lys32, and Lys45. Lys6 is modified (N6-acetyl-N6-methyllysine; alternate). 6 positions are modified to N6-butyryllysine; alternate: Lys6, Lys9, Lys13, Lys17, Lys32, and Lys45. An N6-glutaryllysine; alternate modification is found at Lys6. Residue Lys9 is modified to N6-propionyllysine; alternate. Lys13 is modified (N6-acetyl-N6-methyllysine; alternate). An N6-glutaryllysine; alternate modification is found at Lys13. N6-propionyllysine; alternate is present on residues Lys17, Lys32, and Lys45. Residues 17 to 21 mediate DNA binding; it reads KRHRK. The residue at position 32 (Lys32) is an N6-glutaryllysine; alternate. Residue Lys32 is modified to N6-succinyllysine; alternate. An N6-glutaryllysine; alternate mark is found at Lys60, Lys78, Lys80, and Lys92. Lys60 is modified (N6-(2-hydroxyisobutyryl)lysine). Residues Lys78, Lys80, and Lys92 each carry the N6-(2-hydroxyisobutyryl)lysine; alternate modification. N6-butyryllysine; alternate is present on residues Lys78, Lys80, and Lys92. 3 positions are modified to N6-propionyllysine; alternate: Lys78, Lys80, and Lys92. Lys78 carries the N6-succinyllysine modification. Lys92 is modified (N6-succinyllysine; alternate).

The protein belongs to the histone H4 family. As to quaternary structure, the nucleosome is a histone octamer containing two molecules each of H2A, H2B, H3 and H4 assembled in one H3-H4 heterotetramer and two H2A-H2B heterodimers. The octamer wraps approximately 147 bp of DNA. Post-translationally, butyrylation of histones marks active promoters and competes with histone acetylation. Glutarylation at Lys-92 (H4K91glu) destabilizes nucleosomes by promoting dissociation of the H2A-H2B dimers from nucleosomes.

It is found in the nucleus. It localises to the chromosome. Functionally, core component of nucleosome. Nucleosomes wrap and compact DNA into chromatin, limiting DNA accessibility to the cellular machineries which require DNA as a template. Histones thereby play a central role in transcription regulation, DNA repair, DNA replication and chromosomal stability. DNA accessibility is regulated via a complex set of post-translational modifications of histones, also called histone code, and nucleosome remodeling. The polypeptide is Histone H4 (H4.1) (Oikopleura dioica (Tunicate)).